Reading from the N-terminus, the 639-residue chain is E3 ubiquitin-protein ligase RNF12 (639 aa).

Disordered stretches follow at residues 1-28 (MESA…RLDR), 67-403 (RLQQ…ESER), and 467-534 (NDTD…GGVT). A compositionally biased stretch (low complexity) spans 11–21 (STEQSESQRQS). Composition is skewed to polar residues over residues 110–138 (SVRQ…NPNS) and 147–166 (INVN…QSSE). The segment covering 213-228 (RSPDQRRTRARTDRSR) has biased composition (basic and acidic residues). A compositionally biased stretch (polar residues) spans 244 to 253 (HSSSQTVDAS). Low complexity predominate over residues 269-286 (SSQMQNSSSSNETEGSSR). Residues 290–302 (HITARQQALGTEG) are compositionally biased toward polar residues. Low complexity-rich tracts occupy residues 303–327 (QSQS…SQST) and 335–348 (SRSS…DSSS). The segment covering 349-358 (NAETTGTGQR) has biased composition (polar residues). Residues 372–382 (RPGDYRQRDSI) show a composition bias toward basic and acidic residues. The segment covering 383–399 (ANRTRSRSQTPNNTVTY) has biased composition (polar residues). 2 stretches are compositionally biased toward pro residues: residues 473–482 (NPTPVSPPAA) and 493–506 (PEPP…PEPV). The segment at 585 to 626 (CSVCITEYTEGNKLRKLPCSHEYHVHCIDRWLSENSTCPICR) adopts an RING-type; atypical zinc-finger fold. Residues 636–639 (ESIV) carry the PDZ-binding motif.

Belongs to the RNF12 family. As to quaternary structure, forms homodimers through the C-terminal region. The N-terminus interacts with the homeobox of LIM/homeobox factor lhx1/lim1, with lhx3/lim3 and lhx5/lim5, and with the N-terminus of ldb1.

The protein localises to the nucleus. The catalysed reaction is S-ubiquitinyl-[E2 ubiquitin-conjugating enzyme]-L-cysteine + [acceptor protein]-L-lysine = [E2 ubiquitin-conjugating enzyme]-L-cysteine + N(6)-ubiquitinyl-[acceptor protein]-L-lysine.. The protein operates within protein modification; protein ubiquitination. In terms of biological role, acts as an E3 ubiquitin-protein ligase specific for ldb1, mediating ubiquitination and proteasome-dependent degradation of excess ldb1 in a RING-dependent manner. Does not degrade ldb1 bound to lhx1/lim1, nor lim1 itself and thus contributes to the establishment of proper ldb1-lhx1/lim1 stoichiometry and the formation of a ldb1-lhx1/lim1 complex. Interferes with Spemann organizer function and suppresses secondary axis formation induced by ldb1 and lhx1/lim1. This is E3 ubiquitin-protein ligase RNF12 from Xenopus tropicalis (Western clawed frog).